The primary structure comprises 367 residues: Protein-glutamate methylesterase/protein-glutamine glutaminase 2 (367 aa).

Residues 3 to 120 (SVVVVDDSAF…SLDIVRIEND (118 aa)) enclose the Response regulatory domain. 4-aspartylphosphate is present on aspartate 54. A disordered region spans residues 132–174 (RMLRTPRPVRPAPTASAPAQTAQVASAAPATAPSRPAMPATRA). The segment covering 143–174 (APTASAPAQTAQVASAAPATAPSRPAMPATRA) has biased composition (low complexity). One can recognise a CheB-type methylesterase domain in the interval 175–367 (SRPVRDVVAI…AAAIMNGLYK (193 aa)). Active-site residues include serine 187, histidine 214, and aspartate 310.

Belongs to the CheB family. In terms of processing, phosphorylated by CheA. Phosphorylation of the N-terminal regulatory domain activates the methylesterase activity.

It localises to the cytoplasm. It catalyses the reaction [protein]-L-glutamate 5-O-methyl ester + H2O = L-glutamyl-[protein] + methanol + H(+). The catalysed reaction is L-glutaminyl-[protein] + H2O = L-glutamyl-[protein] + NH4(+). Functionally, involved in chemotaxis. Part of a chemotaxis signal transduction system that modulates chemotaxis in response to various stimuli. Catalyzes the demethylation of specific methylglutamate residues introduced into the chemoreceptors (methyl-accepting chemotaxis proteins or MCP) by CheR. Also mediates the irreversible deamidation of specific glutamine residues to glutamic acid. The chain is Protein-glutamate methylesterase/protein-glutamine glutaminase 2 from Nitratidesulfovibrio vulgaris (strain ATCC 29579 / DSM 644 / CCUG 34227 / NCIMB 8303 / VKM B-1760 / Hildenborough) (Desulfovibrio vulgaris).